The sequence spans 709 residues: MSEQNNEQRSQAAGTDTVDRGNSNAKLEQLEAYREDATGEALSTNTGTRIADNQNTLKAGERGPSLLEDFIMREKITHFDHERIPERVVHARGSAAHGYFEAYEDLSDLTKAGFLAEAGKRTPVFVRFSTVQGPRGSADTVRDVRGFAVKFYTDEGNFDLVGNNMPVFFIQDAIKFPDFVHAVKPEPHNEIPTGASAHDTFWDFVSLTPESAHMVMWLMSDRAIPIAYRNMQGFGVHTFRLVNAAGESVLVKFHWRPKSGTCSLVWDEAQKLAGKDPDFNRRTLWEDIEKGDYPEWELGLQVIPENQQDSFDFDLLDPTKLVPEELVPVRVVGRMVLNRNPDNFFAETEQVAFHVGHVVPGIDFTNDPLLQGRLFSYTDTQLLRLSGPNFNEIPINRPLCPFHNNQRDAPHRQTINRGRASYEPNSIDGGWPKETPPAARNGGFSTYHEPVSGSKLRKRADSFADHFSQAALFWHSMSEAEQAHIVAAYSFELSKVERQSIREREVNQILLNIDPQLAARVAANVGVQLAAPANPTPQPKPSPALSQMNLLSGDIRSRKVAILIADGVAESDVSDLRDALRQEGADAKLIAPSASPVQAENGAELSPEGTWDGLPSVAFDAVFVPGGAASSQAIGADGRGLHYLLEAYKHLKPVAFAGDAQALASQLSLPGDPGVVLGATATDVFPGLRQALMQHRIWQREAATKAIPA.

The segment covering 1–26 has biased composition (polar residues); sequence MSEQNNEQRSQAAGTDTVDRGNSNAK. Residues 1–32 form a disordered region; sequence MSEQNNEQRSQAAGTDTVDRGNSNAKLEQLEA. Catalysis depends on residues His-90 and Asn-163. Tyr-377 contributes to the heme binding site. The tract at residues 419 to 443 is disordered; sequence RASYEPNSIDGGWPKETPPAARNGG.

The protein belongs to the catalase family. HPII subfamily. Heme is required as a cofactor.

It localises to the cytoplasm. The catalysed reaction is 2 H2O2 = O2 + 2 H2O. Functionally, decomposes hydrogen peroxide into water and oxygen; serves to protect cells from the toxic effects of hydrogen peroxide. This chain is Catalase HPII (katE), found in Pseudomonas aeruginosa (strain ATCC 15692 / DSM 22644 / CIP 104116 / JCM 14847 / LMG 12228 / 1C / PRS 101 / PAO1).